The primary structure comprises 248 residues: PF03932 family protein CutC (248 aa).

The protein belongs to the CutC family. Homodimer.

The protein resides in the cytoplasm. This Escherichia coli O9:H4 (strain HS) protein is PF03932 family protein CutC.